Reading from the N-terminus, the 1287-residue chain is DNA-directed RNA polymerase subunit beta (1287 aa).

It belongs to the RNA polymerase beta chain family. As to quaternary structure, the RNAP catalytic core consists of 2 alpha, 1 beta, 1 beta' and 1 omega subunit. When a sigma factor is associated with the core the holoenzyme is formed, which can initiate transcription.

It catalyses the reaction RNA(n) + a ribonucleoside 5'-triphosphate = RNA(n+1) + diphosphate. In terms of biological role, DNA-dependent RNA polymerase catalyzes the transcription of DNA into RNA using the four ribonucleoside triphosphates as substrates. In Salinibacter ruber (strain DSM 13855 / M31), this protein is DNA-directed RNA polymerase subunit beta.